The following is a 315-amino-acid chain: MDNPARKQRGAEKTARIPIKIVPAERLKKPDWIRIRLGAGAEAERFNEIKQTLREHKLHTVCEEASCPNIHECFGKGTATFMIMGDICTRRCPFCDVGHGRPEPLNPNEPTDLARTIAAMRLNYVVITSVDRDDLRDGGAQHFVDCIRETRAASPSTTIEVLVPDFRGRMEIALEIFNQAPPDVMNHNMETVPRLYKQARPGADYAYSLRLLKEFKAGHPDVLTKSGLMVGLGETDDEILDVMRDLRAHDVDMLTIGQYLQPSGGHLPVLRYVHPDTFKMFETEALRMGFRNAACGPMVRSSYWADQQAHGAGVV.

Residues cysteine 62, cysteine 67, cysteine 73, cysteine 88, cysteine 92, cysteine 95, and serine 302 each contribute to the [4Fe-4S] cluster site. Residues 74 to 291 enclose the Radical SAM core domain; the sequence is FGKGTATFMI…ETEALRMGFR (218 aa).

The protein belongs to the radical SAM superfamily. Lipoyl synthase family. It depends on [4Fe-4S] cluster as a cofactor.

Its subcellular location is the cytoplasm. It carries out the reaction [[Fe-S] cluster scaffold protein carrying a second [4Fe-4S](2+) cluster] + N(6)-octanoyl-L-lysyl-[protein] + 2 oxidized [2Fe-2S]-[ferredoxin] + 2 S-adenosyl-L-methionine + 4 H(+) = [[Fe-S] cluster scaffold protein] + N(6)-[(R)-dihydrolipoyl]-L-lysyl-[protein] + 4 Fe(3+) + 2 hydrogen sulfide + 2 5'-deoxyadenosine + 2 L-methionine + 2 reduced [2Fe-2S]-[ferredoxin]. It functions in the pathway protein modification; protein lipoylation via endogenous pathway; protein N(6)-(lipoyl)lysine from octanoyl-[acyl-carrier-protein]: step 2/2. Functionally, catalyzes the radical-mediated insertion of two sulfur atoms into the C-6 and C-8 positions of the octanoyl moiety bound to the lipoyl domains of lipoate-dependent enzymes, thereby converting the octanoylated domains into lipoylated derivatives. This chain is Lipoyl synthase, found in Azoarcus sp. (strain BH72).